We begin with the raw amino-acid sequence, 296 residues long: 4-diphosphocytidyl-2-C-methyl-D-erythritol kinase (296 aa).

Lys11 is an active-site residue. 95-105 (PVAAGMAGGSS) serves as a coordination point for ATP. Asp137 is a catalytic residue.

This sequence belongs to the GHMP kinase family. IspE subfamily.

It catalyses the reaction 4-CDP-2-C-methyl-D-erythritol + ATP = 4-CDP-2-C-methyl-D-erythritol 2-phosphate + ADP + H(+). It participates in isoprenoid biosynthesis; isopentenyl diphosphate biosynthesis via DXP pathway; isopentenyl diphosphate from 1-deoxy-D-xylulose 5-phosphate: step 3/6. Functionally, catalyzes the phosphorylation of the position 2 hydroxy group of 4-diphosphocytidyl-2C-methyl-D-erythritol. This is 4-diphosphocytidyl-2-C-methyl-D-erythritol kinase from Clostridioides difficile (strain 630) (Peptoclostridium difficile).